The sequence spans 118 residues: uncharacterized protein (118 aa).

Residues I41 to V61 form a helical membrane-spanning segment.

The protein resides in the host membrane. This is an uncharacterized protein from Ostreid herpesvirus 1 (isolate France) (OsHV-1).